A 549-amino-acid polypeptide reads, in one-letter code: Lipase 1 (549 aa).

The signal sequence occupies residues 1–15; sequence MELALALSLIASVAA. Cys-75 and Cys-112 are oxidised to a cystine. The Acyl-ester intermediate role is filled by Ser-224. Cysteines 283 and 292 form a disulfide. Asn-329 carries N-linked (GlcNAc...) asparagine glycosylation. The Charge relay system role is filled by Glu-356. A glycan (N-linked (GlcNAc...) asparagine) is linked at Asn-366. His-464 serves as the catalytic Charge relay system.

This sequence belongs to the type-B carboxylesterase/lipase family.

The enzyme catalyses a triacylglycerol + H2O = a diacylglycerol + a fatty acid + H(+). The chain is Lipase 1 (LIP1) from Diutina rugosa (Yeast).